We begin with the raw amino-acid sequence, 232 residues long: Modulator of macroautophagy TMEM150B (232 aa).

Over 1 to 6 (MWAWAL) the chain is Cytoplasmic. A helical membrane pass occupies residues 7-27 (LPVFLAVFGTVGLWAVYAIAV). Residues 28 to 50 (SNNSVNITIEFPYISTCGAYTPQ) are Extracellular-facing. N-linked (GlcNAc...) asparagine glycosylation is found at Asn29 and Asn33. The chain crosses the membrane as a helical span at residues 51 to 71 (SCLFAQICNICCVLALWIVVI). At 72 to 83 (RFQQIRDLGRSS) the chain is on the cytoplasmic side. The helical transmembrane segment at 84 to 104 (HLNTAGLVLGFISSIGISILG) threads the bilayer. At 105–115 (NFQQTIIQEVH) the chain is on the extracellular side. Residues 116 to 136 (LLGALMAFFLGLAYFWIQAFI) form a helical membrane-spanning segment. Residues 137-153 (TYFSPPSRDNKWLVPVR) are Cytoplasmic-facing. Residues 154-174 (FVLCSQCTCMVICMFVLHSTG) traverse the membrane as a helical segment. The Extracellular portion of the chain corresponds to 175 to 177 (FRS). Residues 178 to 198 (AAAICEWILVMCFFALFGVFA) traverse the membrane as a helical segment. Over 199–232 (AEFRHIDFHKLTVQKEGLKVANNDNVVWTVQDVQ) the chain is Cytoplasmic.

Belongs to the DRAM/TMEM150 family.

The protein resides in the cell membrane. The protein localises to the endosome membrane. It is found in the cytoplasmic vesicle. It localises to the autophagosome membrane. In terms of biological role, modulator of macroautophagy that causes accumulation of autophagosomes under basal conditions and enhances autophagic flux. Represses cell death and promotes long-term clonogenic survival of cells grown in the absence of glucose in a macroautophagy-independent manner. May have some role in extracellular matrix engulfment or growth factor receptor recycling, both of which can modulate cell survival. The sequence is that of Modulator of macroautophagy TMEM150B from Danio rerio (Zebrafish).